A 940-amino-acid chain; its full sequence is Glutamate receptor 2.9 (940 aa).

Positions 1-23 are cleaved as a signal peptide; that stretch reads MKTNNTFLSYFVCGFLLMGVGLG. The Extracellular segment spans residues 24-566; it reads QNQTSEIKVG…DTWVFLEPWS (543 aa). Residues Asn-25, Asn-39, Asn-115, Asn-338, Asn-345, and Asn-528 are each glycosylated (N-linked (GlcNAc...) asparagine). A helical membrane pass occupies residues 567-587; sequence LELWVTTGCFFVFIGFVVWLF. At 588–596 the chain is on the cytoplasmic side; that stretch reads EHRVNTDFR. A helical transmembrane segment spans residues 597–617; sequence GPPQYQIGTSLWFSFSTMVFA. Topologically, residues 618–628 are cytoplasmic; sequence HRENVVSNLAR. Residues 629-649 form a helical membrane-spanning segment; that stretch reads FVVVVWCFVVLVLTQSYTASL. Topologically, residues 650–811 are extracellular; the sequence is TSFLTVQSLQ…NRLNLSSFLG (162 aa). N-linked (GlcNAc...) asparagine glycans are attached at residues Asn-771, Asn-776, and Asn-805. A helical transmembrane segment spans residues 812–832; that stretch reads LFLIAGTAISFSLLVFVALFL. The Cytoplasmic segment spans residues 833-940; the sequence is YEHRHTLGDD…ESDIECRVEQ (108 aa). Disordered regions lie at residues 876–900 and 914–940; these read ISSP…QSPS and PSEE…RVEQ.

It belongs to the glutamate-gated ion channel (TC 1.A.10.1) family. As to quaternary structure, may form heteromers. Expressed predominantly in roots.

Its subcellular location is the membrane. Its function is as follows. Glutamate-gated receptor that probably acts as a non-selective cation channel. May be involved in light-signal transduction and calcium homeostasis via the regulation of calcium influx into cells. The protein is Glutamate receptor 2.9 (GLR2.9) of Arabidopsis thaliana (Mouse-ear cress).